A 1377-amino-acid polypeptide reads, in one-letter code: DNA-directed RNA polymerase subunit beta' (1377 aa).

Zn(2+) contacts are provided by Cys-60, Cys-62, Cys-75, and Cys-78. Mg(2+) contacts are provided by Asp-449, Asp-451, and Asp-453. Positions 777, 851, 858, and 861 each coordinate Zn(2+).

The protein belongs to the RNA polymerase beta' chain family. In terms of assembly, the RNAP catalytic core consists of 2 alpha, 1 beta, 1 beta' and 1 omega subunit. When a sigma factor is associated with the core the holoenzyme is formed, which can initiate transcription. The cofactor is Mg(2+). Zn(2+) serves as cofactor.

The enzyme catalyses RNA(n) + a ribonucleoside 5'-triphosphate = RNA(n+1) + diphosphate. Its function is as follows. DNA-dependent RNA polymerase catalyzes the transcription of DNA into RNA using the four ribonucleoside triphosphates as substrates. This is DNA-directed RNA polymerase subunit beta' from Borreliella burgdorferi (strain ZS7) (Borrelia burgdorferi).